We begin with the raw amino-acid sequence, 104 residues long: Large ribosomal subunit protein uL23 (104 aa).

This sequence belongs to the universal ribosomal protein uL23 family. Part of the 50S ribosomal subunit. Contacts protein L29, and trigger factor when it is bound to the ribosome.

Functionally, one of the early assembly proteins it binds 23S rRNA. One of the proteins that surrounds the polypeptide exit tunnel on the outside of the ribosome. Forms the main docking site for trigger factor binding to the ribosome. The chain is Large ribosomal subunit protein uL23 from Paraburkholderia phymatum (strain DSM 17167 / CIP 108236 / LMG 21445 / STM815) (Burkholderia phymatum).